The chain runs to 132 residues: Small ribosomal subunit protein uS8 (132 aa).

Belongs to the universal ribosomal protein uS8 family. Part of the 30S ribosomal subunit. Contacts proteins S5 and S12.

Functionally, one of the primary rRNA binding proteins, it binds directly to 16S rRNA central domain where it helps coordinate assembly of the platform of the 30S subunit. This is Small ribosomal subunit protein uS8 from Bifidobacterium adolescentis (strain ATCC 15703 / DSM 20083 / NCTC 11814 / E194a).